Reading from the N-terminus, the 167-residue chain is Phosphopantetheine adenylyltransferase (167 aa).

Substrate is bound at residue threonine 10. ATP-binding positions include threonine 10–phenylalanine 11 and histidine 18. Substrate contacts are provided by lysine 42, leucine 75, and arginine 89. ATP contacts are provided by residues glycine 90–arginine 92, glutamate 100, and tyrosine 125–serine 131.

Belongs to the bacterial CoaD family. In terms of assembly, homohexamer. Mg(2+) is required as a cofactor.

Its subcellular location is the cytoplasm. It carries out the reaction (R)-4'-phosphopantetheine + ATP + H(+) = 3'-dephospho-CoA + diphosphate. The protein operates within cofactor biosynthesis; coenzyme A biosynthesis; CoA from (R)-pantothenate: step 4/5. Its function is as follows. Reversibly transfers an adenylyl group from ATP to 4'-phosphopantetheine, yielding dephospho-CoA (dPCoA) and pyrophosphate. In Chlorobium phaeobacteroides (strain DSM 266 / SMG 266 / 2430), this protein is Phosphopantetheine adenylyltransferase.